The sequence spans 116 residues: MSFCSFFGGEVFQNHFEPGVYVCAKCGYELFSSRSKYAHSSPWPAFTETIHEDSVAKCPEKNRPEALKVSCGKCGNGLGHEFLNDGPKRGQSRFUIFSSSLKFIPKGKEAPASQGD.

In terms of domain architecture, MsrB spans 1 to 106; that stretch reads MSFCSFFGGE…FSSSLKFIPK (106 aa). Zn(2+)-binding residues include cysteine 23, cysteine 26, cysteine 71, and cysteine 74. Catalysis depends on selenocysteine 95, which acts as the Nucleophile. Residue selenocysteine 95 is a non-standard amino acid, selenocysteine.

It belongs to the MsrB Met sulfoxide reductase family. Requires Zn(2+) as cofactor. In terms of processing, truncated MSRB1/SEPX1 proteins produced by failed UGA/Sec decoding are ubiquitinated by the CRL2(FEM1C) E3 ubiquitin-protein ligase complex.

The protein localises to the cytoplasm. It is found in the nucleus. The protein resides in the cytoskeleton. It carries out the reaction L-methionyl-[protein] + [thioredoxin]-disulfide + H2O = L-methionyl-(R)-S-oxide-[protein] + [thioredoxin]-dithiol. The catalysed reaction is [thioredoxin]-disulfide + L-methionine + H2O = L-methionine (R)-S-oxide + [thioredoxin]-dithiol. Its function is as follows. Methionine-sulfoxide reductase that specifically reduces methionine (R)-sulfoxide back to methionine. While in many cases, methionine oxidation is the result of random oxidation following oxidative stress, methionine oxidation is also a post-translational modification that takes place on specific residue. Acts as a regulator of actin assembly by reducing methionine (R)-sulfoxide mediated by MICALs (MICAL1, MICAL2 or MICAL3) on actin, thereby promoting filament repolymerization. Plays a role in innate immunity by reducing oxidized actin, leading to actin repolymerization in macrophages. This is Methionine-R-sulfoxide reductase B1 (Msrb1) from Rattus norvegicus (Rat).